A 457-amino-acid chain; its full sequence is tRNA modification GTPase MnmE (457 aa).

(6S)-5-formyl-5,6,7,8-tetrahydrofolate is bound by residues Arg25, Glu87, and Arg126. The TrmE-type G domain occupies Gly223–Phe377. Asn233 is a binding site for K(+). Residues Asn233 to Ser238, Thr252 to Thr258, and Asp277 to Gly280 each bind GTP. A Mg(2+)-binding site is contributed by Ser237. Positions 252, 254, and 257 each coordinate K(+). Thr258 serves as a coordination point for Mg(2+). A (6S)-5-formyl-5,6,7,8-tetrahydrofolate-binding site is contributed by Lys457.

The protein belongs to the TRAFAC class TrmE-Era-EngA-EngB-Septin-like GTPase superfamily. TrmE GTPase family. As to quaternary structure, homodimer. Heterotetramer of two MnmE and two MnmG subunits. K(+) is required as a cofactor.

Its subcellular location is the cytoplasm. Its function is as follows. Exhibits a very high intrinsic GTPase hydrolysis rate. Involved in the addition of a carboxymethylaminomethyl (cmnm) group at the wobble position (U34) of certain tRNAs, forming tRNA-cmnm(5)s(2)U34. This Streptococcus pneumoniae (strain Hungary19A-6) protein is tRNA modification GTPase MnmE.